A 751-amino-acid chain; its full sequence is Methionine--tRNA ligase, cytoplasmic (751 aa).

Ser-2 bears the N-acetylserine mark. The interval 36 to 92 (LKPEVDNDNAAMELRNTKEPFLLFDANAILRYVMDDFEGQTSDKYQFALASLQNLLY) is interaction with ARC1. The 'HIGH' region motif lies at 205–215 (PYVNNVPHLGN). Lys-411 provides a ligand contact to ATP. Positions 525–529 (KFSKS) match the 'KMSKS' region motif.

Belongs to the class-I aminoacyl-tRNA synthetase family. In terms of assembly, component of a yeast aminoacyl-tRNA synthase (aaRS) complex formed by methionyl-tRNA synthase MES1, glutamyl-tRNA synthase GUS1 and the tRNA aminoacylation cofactor ARC1 in a stoichiometric complex. Interacts (via N-ter) with ARC1 (via N-ter). Can also form a stable binary complex with ARC1 that is functional in terms of aminoacylation. ARC1 increases the affinity for cognate tRNAs due to the presence of a tRNA binding domain in the middle and C-terminal part of ARC1.

Its subcellular location is the cytoplasm. It catalyses the reaction tRNA(Met) + L-methionine + ATP = L-methionyl-tRNA(Met) + AMP + diphosphate. Its function is as follows. Catalyzes the attachment of methionine to tRNA(Met) in a two-step reaction: methionine is first activated by ATP to form Met-AMP and then transferred to the acceptor end of tRNA(Met). The chain is Methionine--tRNA ligase, cytoplasmic (MES1) from Saccharomyces cerevisiae (strain ATCC 204508 / S288c) (Baker's yeast).